Here is a 763-residue protein sequence, read N- to C-terminus: MMDQARSAFSNLFGGEPLSYTRFSLARQVDGDNSHVEMKLAADEEENADNNMKASVRKPKRFNGRLCFAAIALVIFFLIGFMSGYLGYCKRVEQKEECVKLAETEETDKSETMETEDVPTSSRLYWADLKTLLSEKLNSIEFADTIKQLSQNTYTPREAGSQKDESLAYYIENQFHEFKFSKVWRDEHYVKIQVKSSIGQNMVTIVQSNGNLDPVESPEGYVAFSKPTEVSGKLVHANFGTKKDFEELSYSVNGSLVIVRAGEITFAEKVANAQSFNAIGVLIYMDKNKFPVVEADLALFGHAHLGTGDPYTPGFPSFNHTQFPPSQSSGLPNIPVQTISRAAAEKLFGKMEGSCPARWNIDSSCKLELSQNQNVKLIVKNVLKERRILNIFGVIKGYEEPDRYVVVGAQRDALGAGVAAKSSVGTGLLLKLAQVFSDMISKDGFRPSRSIIFASWTAGDFGAVGATEWLEGYLSSLHLKAFTYINLDKVVLGTSNFKVSASPLLYTLMGKIMQDVKHPVDGKSLYRDSNWISKVEKLSFDNAAYPFLAYSGIPAVSFCFCEDADYPYLGTRLDTYEALTQKVPQLNQMVRTAAEVAGQLIIKLTHDVELNLDYEMYNSKLLSFMKDLNQFKTDIRDMGLSLQWLYSARGDYFRATSRLTTDFHNAEKTNRFVMREINDRIMKVEYHFLSPYVSPRESPFRHIFWGSGSHTLSALVENLKLRQKNITAFNETLFRNQLALATWTIQGVANALSGDIWNIDNEF.

The Cytoplasmic portion of the chain corresponds to 1–67 (MMDQARSAFS…KPKRFNGRLC (67 aa)). Residues 1–67 (MMDQARSAFS…KPKRFNGRLC (67 aa)) are mediates interaction with SH3BP4. Ser10 and Ser19 each carry phosphoserine. Tyr20 carries the phosphotyrosine modification. Residues 20 to 23 (YTRF) carry the Endocytosis signal motif. Residue Thr21 is modified to Phosphothreonine. Position 24 is a phosphoserine (Ser24). The short motif at 58–61 (KPKR) is the Stop-transfer sequence element. Cys67 carries the S-palmitoyl cysteine lipid modification. Residues 68 to 88 (FAAIALVIFFLIGFMSGYLGY) traverse the membrane as a helical; Signal-anchor for type II membrane protein segment. Topologically, residues 89–763 (CKRVEQKEEC…GDIWNIDNEF (675 aa)) are extracellular. The O-linked (GalNAc...) threonine glycan is linked to Thr104. The PA domain maps to 225–315 (SKPTEVSGKL…GTGDPYTPGF (91 aa)). 2 N-linked (GlcNAc...) asparagine glycosylation sites follow: Asn253 and Asn319. Residues 572 to 763 (RLDTYEALTQ…GDIWNIDNEF (192 aa)) form a ligand-binding region. The short motif at 649–651 (RGD) is the Cell attachment site element. Asn725 and Asn730 each carry an N-linked (GlcNAc...) asparagine glycan.

It belongs to the peptidase M28 family. M28B subfamily. As to quaternary structure, homodimer; disulfide-linked. Binds one transferrin molecule per subunit. Interacts with SH3BP4. Interacts with STEAP3; facilitates TFRC endocytosis in erythroid precursor cells. Post-translationally, stearoylated by ZDHHC6 which inhibits TFRC-mediated activation of the JNK pathway and promotes mitochondrial fragmentation. Stearoylation does not affect iron uptake. N- and O-glycosylated, phosphorylated and palmitoylated.

The protein resides in the cell membrane. It localises to the melanosome. Functionally, cellular uptake of iron occurs via receptor-mediated endocytosis of ligand-occupied transferrin receptor into specialized endosomes. Endosomal acidification leads to iron release. The apotransferrin-receptor complex is then recycled to the cell surface with a return to neutral pH and the concomitant loss of affinity of apotransferrin for its receptor. Transferrin receptor is necessary for development of erythrocytes and the nervous system. Upon stimulation, positively regulates T and B cell proliferation through iron uptake. Acts as a lipid sensor that regulates mitochondrial fusion by regulating activation of the JNK pathway. When dietary levels of stearate (C18:0) are low, promotes activation of the JNK pathway, resulting in HUWE1-mediated ubiquitination and subsequent degradation of the mitofusin MFN2 and inhibition of mitochondrial fusion. When dietary levels of stearate (C18:0) are high, TFRC stearoylation inhibits activation of the JNK pathway and thus degradation of the mitofusin MFN2. Mediates uptake of NICOL1 into fibroblasts where it may regulate extracellular matrix production. In Mus musculus (Mouse), this protein is Transferrin receptor protein 1 (Tfrc).